A 91-amino-acid polypeptide reads, in one-letter code: UPF0250 protein Lcho_4239 (91 aa).

It belongs to the UPF0250 family.

This is UPF0250 protein Lcho_4239 from Leptothrix cholodnii (strain ATCC 51168 / LMG 8142 / SP-6) (Leptothrix discophora (strain SP-6)).